Reading from the N-terminus, the 228-residue chain is Leucokinins (228 aa).

A signal peptide spans 1–18 (MAMLLQVALPLLAAVSWG). Residues 19–164 (WELNENDDSL…PRFSPVSAIQ (146 aa)) constitute a propeptide that is removed on maturation. The disordered stretch occupies residues 80-118 (EFSENNEAEDKSPTSAQNTQEHIPGNNFPPPAASNPPVN). Glycine 180 and glycine 193 each carry glycine amide. The propeptide occupies 197 to 209 (NTGRVHRQPKVVI). At glycine 217 the chain carries Glycine amide. The propeptide occupies 221–228 (NQKDDNVF).

The protein resides in the secreted. Functionally, stimulates both fluid secretion by the Malpighian tubules and hindgut contractions. Depolarize the transepithelial voltage of the Malpighian tubules in concentrations of less than 10(-9) M and increase the frequency of hindgut contractions at concentrations above 10(-8) M. The protein is Leucokinins of Aedes aegypti (Yellowfever mosquito).